Here is a 161-residue protein sequence, read N- to C-terminus: Serine-protein kinase RsbW (161 aa).

The protein belongs to the anti-sigma-factor family.

It carries out the reaction L-seryl-[protein] + ATP = O-phospho-L-seryl-[protein] + ADP + H(+). It catalyses the reaction L-threonyl-[protein] + ATP = O-phospho-L-threonyl-[protein] + ADP + H(+). Its function is as follows. Negative regulator of sigma-B activity. Phosphorylates and inactivates its specific antagonist protein, RsbV. Upon phosphorylation of RsbV, RsbW is released and binds to sigma-B, thereby blocking its ability to form an RNA polymerase holoenzyme (E-sigma-B). This chain is Serine-protein kinase RsbW, found in Bacillus licheniformis (strain ATCC 14580 / DSM 13 / JCM 2505 / CCUG 7422 / NBRC 12200 / NCIMB 9375 / NCTC 10341 / NRRL NRS-1264 / Gibson 46).